Consider the following 609-residue polypeptide: MHPRYSPAPPPLHQQQQQQPPQQQQQQMGGPHQQQSGGVGPGTGHGGVGAAVGASNAGHMRAPPNSQQLPPPMPRSQNYANGSSSAASVAAAPPTPRSAFPGAPLTASAVALKGAIPQRPPAMTSPAAAAAGAALAAGAPYRGATSWTPQGYAPAAAAAAAAVAQQAYRYTAPLPQPAYAAYTPHTATTPATTTYGQRVPTAASPSNTNSSSSSNTGSQSGTLSTSLSNTTNTNTTMGPNGTAQNQNQQGGEQLSKTNLYIRGLQQGTTDKDLINMCAQYGTIISTKAILDKTTNKCKGYGFVDFEQPAYAEGAVKGLQAKGVQAQMAKQQEQDPTNLYIANLPPHFKETDLEAMLAKYGQVVSTRILRDQQMNSKGVGFARMESREKCEQIIQMFNGNTIPGAKDPLLVKFADGGPKKKNLFKTPDPSARAWRDVSAEGIPVAYDPSMQQNGVSVNVGTPIGVPYSRFGAPQVGGYPVAGSQWIPGYMMTQPITQVDDQYSSSALQYMQMAAAPQLGVTSYKPEAVNQVQPRGISMMVSGDTAVPYGTMMPQLATLQIGNSYISPTYPYYAPPPTIIPTMPMTDSEQASTAASPDEAYTQYPHQAAPK.

Residues Met-1–Leu-12 show a composition bias toward pro residues. Positions Met-1 to Pro-96 are disordered. Phosphotyrosine is present on Tyr-5. Over residues His-13–Gln-35 the composition is skewed to low complexity. The span at Gly-37 to Ala-50 shows a compositional bias: gly residues. Composition is skewed to low complexity over residues Ala-51 to Gln-68 and Ser-83 to Ala-92. Residues Tyr-152 and Tyr-168 each carry the phosphotyrosine modification. Residues Pro-190 to Glu-252 are disordered. Residues Ser-204–Glu-252 show a composition bias toward low complexity. RRM domains are found at residues Thr-257 to Gln-330 and Thr-336 to Gly-415. The segment at Met-583 to Lys-609 is disordered.

In terms of biological role, has a role in the perception of gravity. The sequence is that of Protein alan shepard from Drosophila grimshawi (Hawaiian fruit fly).